Here is a 642-residue protein sequence, read N- to C-terminus: Cylicin-1 (642 aa).

Disordered regions lie at residues 167–203 and 284–607; these read NGEPEILGNTEKNPSKSSHKIKLPKTSNSTSETNLEY and NCSQ…CEPF. A compositionally biased stretch (polar residues) spans 191–203; it reads KTSNSTSETNLEY. Tandem repeats lie at residues 294–313, 314–344, 345–391, 392–432, 433–464, 465–500, 501–526, and 527–543. A compositionally biased stretch (basic and acidic residues) spans 298-316; sequence GKKERDSDIDSGGSKDAKK. Residues 317-330 are compositionally biased toward basic residues; it reads EGKKKGKRESRKKR. The segment covering 353 to 364 has biased composition (basic and acidic residues); it reads KKNEIKKKKDTD. Positions 388–404 are enriched in low complexity; sequence KKSTGSTGSESVDSKST. Residues 405-416 show a composition bias toward basic residues; the sequence is NKVKKQVKKGVM. Residues 428–440 show a composition bias toward basic and acidic residues; it reads ASSKKSKKDEKKE. Residues 454–463 show a composition bias toward acidic residues; it reads STDADSESEG. Over residues 465–488 the composition is skewed to basic and acidic residues; it reads STGKKNEKKDKKITKKGEKKDAKK. The span at 513 to 523 shows a compositional bias: low complexity; that stretch reads SFSDSTSDSYS. An 8 X approximate tandem repeats region spans residues 527-543; that stretch reads RRKNVRRSDSESEDSSG.

As to quaternary structure, interacts with proteins of spermatozoa head including ACTL7A, CCIN, FAM209 and SPACA1; the interactions may be necessary for proper acrosome attachment to the nuclear envelope. In terms of tissue distribution, testis.

The protein localises to the cytoplasm. It localises to the cytoskeleton. The protein resides in the perinuclear theca. It is found in the calyx. Plays a role in the establishment of normal sperm morphology during spermatogenesis and is required for acrosome attachment to the nuclear envelope. This Mus musculus (Mouse) protein is Cylicin-1.